We begin with the raw amino-acid sequence, 112 residues long: Nitrogen regulatory protein P-II (112 aa).

Position 51 is an O-UMP-tyrosine (Tyr51).

Belongs to the P(II) protein family. In terms of assembly, homotrimer.

Its function is as follows. In nitrogen-limiting conditions, when the ratio of Gln to 2-ketoglutarate decreases, P-II is uridylylated to P-II-UMP. P-II-UMP allows the deadenylation of glutamine synthetase (GS), thus activating the enzyme. Conversely, in nitrogen excess P-II is deuridylated and promotes the adenylation of GS. P-II indirectly controls the transcription of the GS gene (glnA). P-II prevents NR-II-catalyzed conversion of NR-I to NR-I-phosphate, the transcriptional activator of glnA. When P-II is uridylylated to P-II-UMP, these events are reversed. The protein is Nitrogen regulatory protein P-II (glnB) of Rhizobium etli (strain ATCC 51251 / DSM 11541 / JCM 21823 / NBRC 15573 / CFN 42).